The following is a 421-amino-acid chain: UPF0229 protein lpl2726 (421 aa).

The interval 83 to 110 is disordered; it reads IAGDRIKRPGGGGSGGAGGNASDSGEGE. A compositionally biased stretch (gly residues) spans 91-101; that stretch reads PGGGGSGGAGG.

Belongs to the UPF0229 family.

The chain is UPF0229 protein lpl2726 from Legionella pneumophila (strain Lens).